The primary structure comprises 439 residues: DNA damage-inducible protein 1 (439 aa).

A Ubiquitin-like domain is found at 1–82 (MQITIAIQDT…LALHVRETQR (82 aa)). Residues 82–101 (RATAVPESQQGRPAAPPQQD) form a disordered region. The active site involves D220. The segment at 333–398 (QDEPTIEGPG…PAPRAPQARS (66 aa)) is disordered. 2 stretches are compositionally biased toward low complexity: residues 364-375 (GQAGPSTAAQPG) and 383-398 (PASA…QARS). A UBA domain is found at 398–438 (SFPREHIEQLVALGADEQKAIRALEATDGNVEYAASLIFEG).

The protein belongs to the DDI1 family. Binds ubiquitin and polyubiquitinated proteins.

It is found in the cytoplasm. Its function is as follows. Probable aspartic protease. May be involved in the regulation of exocytosis. Acts as a linker between the 19S proteasome and polyubiquitinated proteins via UBA domain interactions with ubiquitin for their subsequent degradation. Required for S-phase checkpoint control. This Neurospora crassa (strain ATCC 24698 / 74-OR23-1A / CBS 708.71 / DSM 1257 / FGSC 987) protein is DNA damage-inducible protein 1 (ddi-1).